We begin with the raw amino-acid sequence, 165 residues long: Ribosomal RNA large subunit methyltransferase H (165 aa).

Residue Gly109 participates in S-adenosyl-L-methionine binding.

It belongs to the RNA methyltransferase RlmH family. In terms of assembly, homodimer.

The protein resides in the cytoplasm. It catalyses the reaction pseudouridine(1915) in 23S rRNA + S-adenosyl-L-methionine = N(3)-methylpseudouridine(1915) in 23S rRNA + S-adenosyl-L-homocysteine + H(+). Functionally, specifically methylates the pseudouridine at position 1915 (m3Psi1915) in 23S rRNA. This Methylorubrum extorquens (strain CM4 / NCIMB 13688) (Methylobacterium extorquens) protein is Ribosomal RNA large subunit methyltransferase H.